The following is a 663-amino-acid chain: Subtilisin-like serine protease (663 aa).

The first 23 residues, 1–23 (MKKFGAVVLALFLVGLMAGSVLA), serve as a signal peptide directing secretion. A propeptide spans 24-136 (APQKPAVRNV…IQEDYVVKVA (113 aa)) (removed in mature form). One can recognise a Peptidase S8 domain in the interval 139–439 (TEGLDESAAQ…AGRVNAYKAA (301 aa)). Active-site charge relay system residues include Asp-170, His-203, and Ser-382. 9 residues coordinate Ca(2+): Pro-420, Ile-423, Asp-483, Leu-484, Asp-485, Asp-497, Tyr-498, Thr-501, and Glu-507. The segment at 537–565 (VSDGSLGQPSGGGSEPSPSPSPEPTVDEK) is disordered. A propeptide spans 563-663 (DEKTFTGTVH…YQLDAKVYYG (101 aa)) (removed in mature form).

Belongs to the peptidase S8 family. Monomer.

It carries out the reaction Hydrolysis of proteins with broad specificity for peptide bonds, and a preference for a large uncharged residue in P1. Hydrolyzes peptide amides.. Resistant to treatment with 5% SDS, 8 M urea, 10% Triton X-100 or 10% Tween-20. Fully active although less stable in the presence of 10 mM EDTA. Activity not affected by the absence or presence of 10 mM CaCl(2). Unstable in the presence of 2 M or over GdnHCl and loses 35% and 99% of its activity upon incubation with 2 and 4 M GdnHCl, respectively, for 1 hour at 55 degrees Celsius. Nearly fully loses activity upon incubation at pH 2.0. In terms of biological role, serine protease with a broad substrate specificity. The sequence is that of Subtilisin-like serine protease from Thermococcus kodakarensis (strain ATCC BAA-918 / JCM 12380 / KOD1) (Pyrococcus kodakaraensis (strain KOD1)).